The following is a 475-amino-acid chain: Ribulose bisphosphate carboxylase large chain (475 aa).

A propeptide spanning residues 1–2 (MS) is cleaved from the precursor. An N-acetylproline modification is found at Pro3. N6,N6,N6-trimethyllysine is present on Lys14. Residues Asn123 and Thr173 each contribute to the substrate site. Residue Lys175 is the Proton acceptor of the active site. Lys177 lines the substrate pocket. Residues Lys201, Asp203, and Glu204 each contribute to the Mg(2+) site. Lys201 is subject to N6-carboxylysine. The active-site Proton acceptor is His294. Residues Arg295, His327, and Ser379 each coordinate substrate.

This sequence belongs to the RuBisCO large chain family. Type I subfamily. Heterohexadecamer of 8 large chains and 8 small chains; disulfide-linked. The disulfide link is formed within the large subunit homodimers. The cofactor is Mg(2+). Post-translationally, the disulfide bond which can form in the large chain dimeric partners within the hexadecamer appears to be associated with oxidative stress and protein turnover.

It is found in the plastid. It localises to the chloroplast. The enzyme catalyses 2 (2R)-3-phosphoglycerate + 2 H(+) = D-ribulose 1,5-bisphosphate + CO2 + H2O. It catalyses the reaction D-ribulose 1,5-bisphosphate + O2 = 2-phosphoglycolate + (2R)-3-phosphoglycerate + 2 H(+). Functionally, ruBisCO catalyzes two reactions: the carboxylation of D-ribulose 1,5-bisphosphate, the primary event in carbon dioxide fixation, as well as the oxidative fragmentation of the pentose substrate in the photorespiration process. Both reactions occur simultaneously and in competition at the same active site. This is Ribulose bisphosphate carboxylase large chain from Picea abies (Norway spruce).